Consider the following 541-residue polypeptide: MAVKYDLTQTLLPYLDRHLGLPLLSHLAGSGIFSETDIAKAQYELAKNTSMVDYALQLYEQAYPNQPAPAEIEKQRENAIALNDKLGSEVDHVLEVIQDPSVASALKQDKAQNLQWLEEKYNLTSEQINALYRYGYFQFSCGNYGDASSYLYHFRVLSTDPVLTMSSHWGKLASDILVGEWEQALSELKLLREQLDSSAAHVTASYAQPSTSNGSSQNDDLTQEGLLKKRAWLLHWALFIFFNHPGGREQLVEMFLSPVYLNTIQTTCWWLLRYVVAALLLSRRTTRVYLVQQPAPATLMASVSGANVNKLSPQQAIKDIVNIIDSESYRIAGTDPIVDFLSKLFVDFDFEAAQEQLTLAEQVASKDFFLADFKDELVEACRVVISEAYCRIHSKVDIADLVKRLNLSKEDGEKWIVNLVRDTRADAKIDFKEGMVFMNPTHPPVYQTIIEKTRGFTFRTSAMGTAIDRKAHPPSLNNTHNLNGNDKRGNAGGRGGRGGQRNQGGQRDRSHAHNNEAKREGESASAEEAQQQQPAQAIAAN.

Positions 252-443 (VEMFLSPVYL…GMVFMNPTHP (192 aa)) constitute a PCI domain. Residues 466–541 (AIDRKAHPPS…QQPAQAIAAN (76 aa)) are disordered. The segment covering 490 to 502 (NAGGRGGRGGQRN) has biased composition (gly residues). Residues 506–522 (QRDRSHAHNNEAKREGE) are compositionally biased toward basic and acidic residues. A compositionally biased stretch (low complexity) spans 523–541 (SASAEEAQQQQPAQAIAAN).

It belongs to the eIF-3 subunit E family. As to quaternary structure, component of the eukaryotic translation initiation factor 3 (eIF-3) complex.

It localises to the cytoplasm. Its function is as follows. Component of the eukaryotic translation initiation factor 3 (eIF-3) complex, which is involved in protein synthesis of a specialized repertoire of mRNAs and, together with other initiation factors, stimulates binding of mRNA and methionyl-tRNAi to the 40S ribosome. The eIF-3 complex specifically targets and initiates translation of a subset of mRNAs involved in cell proliferation. This Mycosarcoma maydis (Corn smut fungus) protein is Eukaryotic translation initiation factor 3 subunit E.